A 177-amino-acid chain; its full sequence is Large ribosomal subunit protein uL5 (177 aa).

The protein belongs to the universal ribosomal protein uL5 family. Part of the 50S ribosomal subunit; part of the 5S rRNA/L5/L18/L25 subcomplex. Contacts the 5S rRNA and the P site tRNA. Forms a bridge to the 30S subunit in the 70S ribosome.

Functionally, this is one of the proteins that bind and probably mediate the attachment of the 5S RNA into the large ribosomal subunit, where it forms part of the central protuberance. In the 70S ribosome it contacts protein S13 of the 30S subunit (bridge B1b), connecting the 2 subunits; this bridge is implicated in subunit movement. Contacts the P site tRNA; the 5S rRNA and some of its associated proteins might help stabilize positioning of ribosome-bound tRNAs. This Neorickettsia sennetsu (strain ATCC VR-367 / Miyayama) (Ehrlichia sennetsu) protein is Large ribosomal subunit protein uL5.